The sequence spans 336 residues: UPF0324 membrane protein BR0028/BS1330_I0028 (336 aa).

A run of 11 helical transmembrane segments spans residues 9 to 26, 36 to 55, 68 to 90, 94 to 116, 128 to 150, 160 to 182, 189 to 211, 221 to 240, 247 to 269, 279 to 301, and 313 to 335; these read ILPG…AMVL, RAWL…VRSL, FSAK…ASAV, GSGL…YGIG, LVAC…VIGA, AFTA…LLGL, ILAG…VSLL, LVRV…ISGN, PGFF…LHSL, AIQY…GVDI, and LTAI…MLGV.

This sequence belongs to the UPF0324 family.

The protein localises to the cell membrane. The protein is UPF0324 membrane protein BR0028/BS1330_I0028 of Brucella suis biovar 1 (strain 1330).